An 88-amino-acid chain; its full sequence is Apolipoprotein C-I (88 aa).

A signal peptide spans 1-26; sequence MRLFLSLPVLVVVLAMVLEGPAPTQA.

The protein belongs to the apolipoprotein C1 family.

It localises to the secreted. Its function is as follows. Inhibitor of lipoprotein binding to the low density lipoprotein (LDL) receptor, LDL receptor-related protein, and very low density lipoprotein (VLDL) receptor. Associates with high density lipoproteins (HDL) and the triacylglycerol-rich lipoproteins in the plasma and makes up about 10% of the protein of the VLDL and 2% of that of HDL. Appears to interfere directly with fatty acid uptake and is also the major plasma inhibitor of cholesteryl ester transfer protein (CETP). Binds free fatty acids and reduces their intracellular esterification. Modulates the interaction of APOE with beta-migrating VLDL and inhibits binding of beta-VLDL to the LDL receptor-related protein. The polypeptide is Apolipoprotein C-I (APOC1) (Mirounga angustirostris (Northern elephant seal)).